The primary structure comprises 685 residues: MTRLYQPSQDWPACTLSYRHFHLLWTLPLCAVLFLVARPFLTKLDRAKLILLPIIAFVWTTPWDNLIVKNRAWFYHRHCIWFTIGYVPIEEYFFFVIQSLISTLWCTLLTRWALPNLYLVPSSPKRRRLATPAVVVCMLCFVLGLKAAVPETHSYYFGMITWWSSLPLALLLWGSVDFVSNMGVRAGLAPFALSVLAPTFYLWASDVYALRRGTWHINEATSLNVFPIPHLPIEEMLFFLVTNLILVSACFTFDRCVAICRQSVAENAPPLSPSYLPLGSLDTYTKLWAAFVRSDRPPVATSAASASVEPRDLAASLQVLRAASKSFNAASLLLPWDLRTDLGCLYAFCRVADDLVDDDAQGLEAKSSNLDVIRAIVDAIYADSPEAAPQKQPSAQPVSDRIRTLLAPVALPDKVKQDTRAAAASIAPLTRYIPKRLWYEMLQGYSLDLLFEHPDADKRTRLRTMDDLVEYSQCVAGVVGEMCTRVILGRCGGAVPLELKVDRTIAVPSTKAAMAGKALDLTRADDVHALLYEARRMGVSLQLVNIARDIVPDSVELRRCYLPTDMFDKQDARMQDALLAGHIAVRSQHTTTLEEKELVQPRDVRKYALRLLRVSRGLYDQAYPALAQIPNRPARAGLKAACSVYAAIGTRIEAQTETDVAEGRRARMSNRDRMLRAVSAVYFGV.

The tract at residues 15–255 is lycopene beta-cyclase; it reads TLSYRHFHLL…LVSACFTFDR (241 aa). Helical transmembrane passes span 21 to 41, 48 to 68, 92 to 114, 129 to 149, 156 to 176, 187 to 207, and 231 to 251; these read FHLL…RPFL, KLIL…NLIV, YFFF…RWAL, LATP…KAAV, YFGM…WGSV, GLAP…ASDV, and LPIE…SACF. Residues 262 to 685 are phytoene synthase; sequence QSVAENAPPL…RAVSAVYFGV (424 aa).

This sequence in the N-terminal section; belongs to the lycopene beta-cyclase family. In the C-terminal section; belongs to the phytoene/squalene synthase family.

The protein localises to the membrane. It carries out the reaction all-trans-lycopene = gamma-carotene. It catalyses the reaction gamma-carotene = all-trans-beta-carotene. The catalysed reaction is 2 (2E,6E,10E)-geranylgeranyl diphosphate = 15-cis-phytoene + 2 diphosphate. It participates in carotenoid biosynthesis; beta-carotene biosynthesis. It functions in the pathway carotenoid biosynthesis; phytoene biosynthesis; all-trans-phytoene from geranylgeranyl diphosphate: step 1/1. In terms of biological role, bifunctional enzyme that catalyzes the reactions from geranylgeranyl diphosphate to phytoene (phytoene synthase) and lycopene to beta-carotene via the intermediate gamma-carotene (lycopene cyclase). The protein is Bifunctional lycopene cyclase/phytoene synthase of Sporisorium reilianum (strain SRZ2) (Maize head smut fungus).